A 258-amino-acid chain; its full sequence is Ribosomal RNA small subunit methyltransferase J (258 aa).

S-adenosyl-L-methionine-binding positions include 104-105, 120-121, and Asp-175; these read RD and ER.

Belongs to the methyltransferase superfamily. RsmJ family.

It is found in the cytoplasm. It carries out the reaction guanosine(1516) in 16S rRNA + S-adenosyl-L-methionine = N(2)-methylguanosine(1516) in 16S rRNA + S-adenosyl-L-homocysteine + H(+). Functionally, specifically methylates the guanosine in position 1516 of 16S rRNA. This Chromobacterium violaceum (strain ATCC 12472 / DSM 30191 / JCM 1249 / CCUG 213 / NBRC 12614 / NCIMB 9131 / NCTC 9757 / MK) protein is Ribosomal RNA small subunit methyltransferase J.